The following is a 374-amino-acid chain: Pectate lyase 3 (374 aa).

Positions M1–A22 are cleaved as a signal peptide. Residues C93 and C176 are joined by a disulfide bond. Ca(2+)-binding residues include D150, D152, E187, and D191. R239 is a catalytic residue. A disulfide bridge connects residues C350 and C373.

The protein belongs to the polysaccharide lyase 1 family. PLADES subfamily. It depends on Ca(2+) as a cofactor.

The protein localises to the secreted. The catalysed reaction is Eliminative cleavage of (1-&gt;4)-alpha-D-galacturonan to give oligosaccharides with 4-deoxy-alpha-D-galact-4-enuronosyl groups at their non-reducing ends.. Its pathway is glycan metabolism; pectin degradation; 2-dehydro-3-deoxy-D-gluconate from pectin: step 2/5. In terms of biological role, involved in maceration and soft-rotting of plant tissue. This Pectobacterium carotovorum subsp. carotovorum (Erwinia carotovora subsp. carotovora) protein is Pectate lyase 3 (pel3).